Here is a 366-residue protein sequence, read N- to C-terminus: Neutral protease 2 homolog MGYG_04094 (366 aa).

Positions M1–A19 are cleaved as a signal peptide. Positions A20–R188 are excised as a propeptide. 2 cysteine pairs are disulfide-bonded: C196–C267 and C274–C292. Residue H317 participates in Zn(2+) binding. E318 is an active-site residue. Zn(2+) contacts are provided by H321 and D332.

Belongs to the peptidase M35 family. Zn(2+) is required as a cofactor.

The protein resides in the secreted. It carries out the reaction Preferential cleavage of bonds with hydrophobic residues in P1'. Also 3-Asn-|-Gln-4 and 8-Gly-|-Ser-9 bonds in insulin B chain.. In terms of biological role, secreted metalloproteinase that allows assimilation of proteinaceous substrates. Shows high activities on basic nuclear substrates such as histone and protamine. May be involved in virulence. The sequence is that of Neutral protease 2 homolog MGYG_04094 from Arthroderma gypseum (strain ATCC MYA-4604 / CBS 118893) (Microsporum gypseum).